Here is a 270-residue protein sequence, read N- to C-terminus: 4-diphosphocytidyl-2-C-methyl-D-erythritol kinase (270 aa).

Residue Lys-8 is part of the active site. 90–100 is an ATP binding site; it reads PIGAGLGGGSS. Asp-132 is an active-site residue.

This sequence belongs to the GHMP kinase family. IspE subfamily.

The catalysed reaction is 4-CDP-2-C-methyl-D-erythritol + ATP = 4-CDP-2-C-methyl-D-erythritol 2-phosphate + ADP + H(+). The protein operates within isoprenoid biosynthesis; isopentenyl diphosphate biosynthesis via DXP pathway; isopentenyl diphosphate from 1-deoxy-D-xylulose 5-phosphate: step 3/6. Its function is as follows. Catalyzes the phosphorylation of the position 2 hydroxy group of 4-diphosphocytidyl-2C-methyl-D-erythritol. The protein is 4-diphosphocytidyl-2-C-methyl-D-erythritol kinase of Cytophaga hutchinsonii (strain ATCC 33406 / DSM 1761 / CIP 103989 / NBRC 15051 / NCIMB 9469 / D465).